Consider the following 262-residue polypeptide: Thiazole synthase (262 aa).

Lys104 (schiff-base intermediate with DXP) is an active-site residue. 1-deoxy-D-xylulose 5-phosphate is bound by residues Gly165, 191-192 (AG), and 213-214 (NT).

Belongs to the ThiG family. As to quaternary structure, homotetramer. Forms heterodimers with either ThiH or ThiS.

Its subcellular location is the cytoplasm. The catalysed reaction is [ThiS sulfur-carrier protein]-C-terminal-Gly-aminoethanethioate + 2-iminoacetate + 1-deoxy-D-xylulose 5-phosphate = [ThiS sulfur-carrier protein]-C-terminal Gly-Gly + 2-[(2R,5Z)-2-carboxy-4-methylthiazol-5(2H)-ylidene]ethyl phosphate + 2 H2O + H(+). The protein operates within cofactor biosynthesis; thiamine diphosphate biosynthesis. Catalyzes the rearrangement of 1-deoxy-D-xylulose 5-phosphate (DXP) to produce the thiazole phosphate moiety of thiamine. Sulfur is provided by the thiocarboxylate moiety of the carrier protein ThiS. In vitro, sulfur can be provided by H(2)S. The sequence is that of Thiazole synthase from Nitrosococcus oceani (strain ATCC 19707 / BCRC 17464 / JCM 30415 / NCIMB 11848 / C-107).